The chain runs to 450 residues: UDP-N-acetylmuramoylalanine--D-glutamate ligase (450 aa).

119 to 125 (GSNGKTT) contributes to the ATP binding site.

The protein belongs to the MurCDEF family.

Its subcellular location is the cytoplasm. It carries out the reaction UDP-N-acetyl-alpha-D-muramoyl-L-alanine + D-glutamate + ATP = UDP-N-acetyl-alpha-D-muramoyl-L-alanyl-D-glutamate + ADP + phosphate + H(+). The protein operates within cell wall biogenesis; peptidoglycan biosynthesis. Cell wall formation. Catalyzes the addition of glutamate to the nucleotide precursor UDP-N-acetylmuramoyl-L-alanine (UMA). The polypeptide is UDP-N-acetylmuramoylalanine--D-glutamate ligase (Streptococcus pneumoniae serotype 19F (strain G54)).